A 470-amino-acid polypeptide reads, in one-letter code: Auxin transporter-like protein 3 (470 aa).

The Cytoplasmic segment spans residues 1-57 (MAAEKIETVVAGNYLEMEREEENISGNKKSSTKTKLSNFFWHGGSVYDAWFSCASNQ). A helical membrane pass occupies residues 58–75 (VAQVLLTLPYSFSQLGMM). Topologically, residues 76–77 (SG) are extracellular. Residues 78–98 (ILFQLFYGLMGSWTAYLISVL) form a helical membrane-spanning segment. Residues 99-134 (YVEYRTRKEREKFDFRNHVIQWFEVLDGLLGKHWRN) lie on the Cytoplasmic side of the membrane. The chain crosses the membrane as a helical span at residues 135–155 (LGLIFNCTFLLFGSVIQLIAC). Residues 156-170 (ASNIYYINDKLDKRT) lie on the Extracellular side of the membrane. A helical membrane pass occupies residues 171 to 191 (WTYIFGACCATTVFIPSFHNY). Position 192 (arginine 192) is a topological domain, cytoplasmic. The chain crosses the membrane as a helical span at residues 193–213 (IWSFLGLAMTTYTSWYLTIAS). Residues 214-230 (LLHGQAEDVKHSGPTTM) lie on the Extracellular side of the membrane. A helical membrane pass occupies residues 231 to 251 (VLYFTGATNILYTFGGHAVTV). The Cytoplasmic segment spans residues 252–264 (EIMHAMWKPQKFK). Residues 265 to 285 (AIYLLATIYVLTLTLPSASAV) traverse the membrane as a helical segment. The Extracellular portion of the chain corresponds to 286 to 312 (YWAFGDKLLTHSNALSLLPKTGFRDTA). Residues 313–333 (VILMLIHQFITFGFASTPLYF) form a helical membrane-spanning segment. The Cytoplasmic segment spans residues 334-354 (VWEKLIGVHETKSMFKRAMAR). The helical transmembrane segment at 355-375 (LPVVVPIWFLAIIFPFFGPIN) threads the bilayer. Serine 376 is a topological domain (extracellular). Residues 377–397 (AVGSLLVSFTVYIIPALAHML) traverse the membrane as a helical segment. Residues 398-426 (TFAPAPSRENAVERPPRVVGGWMGTYCIN) are Cytoplasmic-facing. The chain crosses the membrane as a helical span at residues 427 to 447 (IFVVVWVFVVGFGFGGWASMV). Over 448–470 (NFVRQIDTFGLFTKCYQCPPHKP) the chain is Extracellular.

The protein belongs to the amino acid/polyamine transporter 2 family. Amino acid/auxin permease (AAAP) (TC 2.A.18.1) subfamily.

It is found in the cell membrane. Functionally, carrier protein involved in proton-driven auxin influx. Mediates the formation of auxin gradient from developing leaves (site of auxin biosynthesis) to tips by contributing to the loading of auxin in vascular tissues and facilitating acropetal (base to tip) auxin transport within inner tissues of the root apex, and basipetal (tip to base) auxin transport within outer tissues of the root apex. The polypeptide is Auxin transporter-like protein 3 (LAX3) (Arabidopsis thaliana (Mouse-ear cress)).